Reading from the N-terminus, the 455-residue chain is Nuclear mRNA export protein THP1 (455 aa).

The region spanning 220-431 (IEYRYLLGRY…QLCVVKKTTM (212 aa)) is the PCI domain.

Heterodimer with THP1. The SAC3-THP1 complex interacts with CDC31 and SUS1, and with the mRNA export factor MEX67-MTR2, the TREX complex component SUB2, and the nucleoporin NUP1.

The protein resides in the nucleus envelope. Functionally, component of the SAC3-THP1 complex, which functions in transcription-coupled mRNA export from the nucleus to the cytoplasm. SAC3-THP1 functions in docking export-competent ribonucleoprotein particles (mRNPs) to the nuclear entrance of the nuclear pore complex (nuclear basket), by association with components of the nuclear mRNA export machinery (MEX67-MTR2 and SUB2) in the nucleoplasm and the nucleoporin NUP1 at the nuclear basket. THP1 binds to RNA in vitro. The sequence is that of Nuclear mRNA export protein THP1 (THP1) from Saccharomyces cerevisiae (strain ATCC 204508 / S288c) (Baker's yeast).